The primary structure comprises 233 residues: U2 small nuclear ribonucleoprotein A' (233 aa).

4 LRR repeats span residues 20 to 40, 42 to 63, 65 to 86, and 89 to 110; these read KLTL…AITQ, KYQV…PKRF, NLQC…SFPS, and HITS…FKDK. The LRRCT domain maps to 122-160; it reads NPITEMENYRYFIIWLIPSLKVLDFKKVKQAERKTSEDM.

Belongs to the U2 small nuclear ribonucleoprotein A family. In terms of assembly, associated with the spliceosome.

The protein resides in the nucleus. Its function is as follows. Involved in pre-mRNA splicing. This chain is U2 small nuclear ribonucleoprotein A' (LEA1), found in Candida albicans (strain SC5314 / ATCC MYA-2876) (Yeast).